The sequence spans 472 residues: uncharacterized protein (472 aa).

This sequence to B.subtilis YcdC.

This is an uncharacterized protein from Bacillus subtilis (strain 168).